The following is a 393-amino-acid chain: MTGPATRKDLMIVNMGPHHPSMHGVLRLIVTLDGEDVIDCEPILGYLHRGMEKIAENRTIIQYLPYVTRWDYLATMFTEAITVNAPEQLGNIQVPKRASYIRVIMLELSRIASHLLWLGPFMADIGAQTPFFYIFRERELIYDLFEAATGMRMMHNFFRIGGIAADLPHGWIDKCLDFCDYFLTGIAEYQKLITRNPIFLERVEGVGIIGGEEAINWGLSGPMLRASGIQWDLRKVDHYECYDEFDWEVQWQNEGDSLARYLVRISEMTESIKIIQQALEGIPGGPYENLEIRRFDRVKDTVWNEFDYRFISKKPSPTFELSKQELYARVEAPKGELGIFLIGDKGVFPWRYKIRPPGFINLQILPQLVKRMKLADIMTILGSIDIIMGEVDR.

It belongs to the complex I 49 kDa subunit family. In terms of assembly, NDH is composed of at least 16 different subunits, 5 of which are encoded in the nucleus.

It is found in the plastid. The protein resides in the chloroplast thylakoid membrane. The enzyme catalyses a plastoquinone + NADH + (n+1) H(+)(in) = a plastoquinol + NAD(+) + n H(+)(out). It carries out the reaction a plastoquinone + NADPH + (n+1) H(+)(in) = a plastoquinol + NADP(+) + n H(+)(out). Functionally, NDH shuttles electrons from NAD(P)H:plastoquinone, via FMN and iron-sulfur (Fe-S) centers, to quinones in the photosynthetic chain and possibly in a chloroplast respiratory chain. The immediate electron acceptor for the enzyme in this species is believed to be plastoquinone. Couples the redox reaction to proton translocation, and thus conserves the redox energy in a proton gradient. In Lactuca sativa (Garden lettuce), this protein is NAD(P)H-quinone oxidoreductase subunit H, chloroplastic.